The following is a 130-amino-acid chain: Endoglucanase 2 (130 aa).

Residues H47, D98, and E107 contribute to the active site.

It belongs to the glycosyl hydrolase 9 (cellulase E) family.

It catalyses the reaction Endohydrolysis of (1-&gt;4)-beta-D-glucosidic linkages in cellulose, lichenin and cereal beta-D-glucans.. Involved in ripening fruit process. This chain is Endoglucanase 2 (CEL2), found in Persea americana (Avocado).